A 203-amino-acid polypeptide reads, in one-letter code: Small ribosomal subunit protein uS2 (203 aa).

This sequence belongs to the universal ribosomal protein uS2 family.

In Methanoregula boonei (strain DSM 21154 / JCM 14090 / 6A8), this protein is Small ribosomal subunit protein uS2.